A 181-amino-acid polypeptide reads, in one-letter code: Inner membrane-spanning protein YciB (181 aa).

5 helical membrane-spanning segments follow: residues 10 to 30, 50 to 70, 72 to 92, 118 to 138, and 148 to 168; these read LVIFFAVYKFFDIYIASGALI, MHLITFAMVTVFGTLTLVFHD, AFIKWKVTIIYALFALALGIS, ITWYWVIFFATCGLVNIYVAF, and FKVFGLTALTLVNTVITVFYL.

Belongs to the YciB family.

The protein resides in the cell inner membrane. Plays a role in cell envelope biogenesis, maintenance of cell envelope integrity and membrane homeostasis. The chain is Inner membrane-spanning protein YciB from Shewanella putrefaciens (strain CN-32 / ATCC BAA-453).